A 311-amino-acid polypeptide reads, in one-letter code: Pyrimidine-specific ribonucleoside hydrolase RihA (311 aa).

His-240 is an active-site residue.

The protein belongs to the IUNH family. RihA subfamily.

Hydrolyzes cytidine or uridine to ribose and cytosine or uracil, respectively. The polypeptide is Pyrimidine-specific ribonucleoside hydrolase RihA (Salmonella dublin (strain CT_02021853)).